A 491-amino-acid chain; its full sequence is Anthranilate synthase component 1 (491 aa).

L-tryptophan is bound by residues Ser-49 and 271–273; that span reads PYL. 306 to 307 is a chorismate binding site; that stretch reads GT. Residue Glu-333 participates in Mg(2+) binding. Chorismate-binding positions include Tyr-421, Arg-441, 455 to 457, and Gly-457; that span reads GAG. Glu-470 provides a ligand contact to Mg(2+).

The protein belongs to the anthranilate synthase component I family. Heterotetramer consisting of two non-identical subunits: a beta subunit (TrpG) and a large alpha subunit (TrpE). Mg(2+) is required as a cofactor.

The catalysed reaction is chorismate + L-glutamine = anthranilate + pyruvate + L-glutamate + H(+). It functions in the pathway amino-acid biosynthesis; L-tryptophan biosynthesis; L-tryptophan from chorismate: step 1/5. Its activity is regulated as follows. Feedback inhibited by tryptophan. Functionally, part of a heterotetrameric complex that catalyzes the two-step biosynthesis of anthranilate, an intermediate in the biosynthesis of L-tryptophan. In the first step, the glutamine-binding beta subunit (TrpG) of anthranilate synthase (AS) provides the glutamine amidotransferase activity which generates ammonia as a substrate that, along with chorismate, is used in the second step, catalyzed by the large alpha subunit of AS (TrpE) to produce anthranilate. In the absence of TrpG, TrpE can synthesize anthranilate directly from chorismate and high concentrations of ammonia. In Neisseria meningitidis serogroup C / serotype 2a (strain ATCC 700532 / DSM 15464 / FAM18), this protein is Anthranilate synthase component 1 (trpE).